The following is a 510-amino-acid chain: Maturase K (510 aa).

This sequence belongs to the intron maturase 2 family. MatK subfamily.

Its subcellular location is the plastid. It is found in the chloroplast. Its function is as follows. Usually encoded in the trnK tRNA gene intron. Probably assists in splicing its own and other chloroplast group II introns. The polypeptide is Maturase K (Thuja plicata (Western red-cedar)).